The following is a 141-amino-acid chain: Hemoglobin subunit alpha-D/D' (141 aa).

In terms of domain architecture, Globin spans 1 to 141 (MLTADDKKLI…VAAVLAEKYR (141 aa)). Heme b-binding residues include His-58 and His-87.

It belongs to the globin family. Heterotetramer of two alpha-D chains and two beta chains. Red blood cells.

Its function is as follows. Involved in oxygen transport from the lung to the various peripheral tissues. In Gyps rueppelli (Rueppell's griffon), this protein is Hemoglobin subunit alpha-D/D' (HBAD).